The following is a 169-amino-acid chain: Der GTPase-activating protein YihI (169 aa).

Disordered stretches follow at residues 1–100 (MKPS…AELE) and 144–169 (GLSY…LRGN). Basic residues predominate over residues 10-19 (SKGHAKARRK). Basic and acidic residues predominate over residues 20–30 (TREELDQEARD). The segment covering 31–40 (RKRQKKRRGH) has biased composition (basic residues). The span at 49 to 58 (GNTSSGSKGQ) shows a compositional bias: polar residues. Acidic residues predominate over residues 147–159 (YDDDEEEEEDEKQ). Over residues 160–169 (EDMMRLLRGN) the composition is skewed to basic and acidic residues.

It belongs to the YihI family. As to quaternary structure, interacts with Der.

Functionally, a GTPase-activating protein (GAP) that modifies Der/EngA GTPase function. May play a role in ribosome biogenesis. This Escherichia coli (strain SMS-3-5 / SECEC) protein is Der GTPase-activating protein YihI.